Here is a 943-residue protein sequence, read N- to C-terminus: MIPTLLLGFGVYLSWGLLGSWAQDPGTKFSHLNRPGMPEGWRLGAEDTSRDPIRRNWCPYQKSRLVTFVAACKTEKFLVHSQQPCPQGAPDCQGVRVMYRVAQKPVYQVQQKVLISVDWRCCPGFQGPDCQDHNPTANPEPTEPSGKLQETWDSMDGFELGHPVPEFNEIKVPQEQQENLLQNLQNDAQSVEDGFPGSWEAPPSNLTDEMTEANLTEFEFPGRTSEHLLQPHIDAFLKAHFSPIWKNFNDSLHSLSQAIRNLSLDVEANHQAIKMIQEGTVARADFQELGAKFEAKVQQNSQRLGQLWQDVEDQLHAQRRSVHHALSDVQAEVSTKLKQLVKAQELPGANGSLVMASAAAAARPEPESLQARLGQLQRNLSALHMVTSQREEELQSTLKNMDSVLKQHAEEIKELYSESDETFDQISKVERQVEELLVNHTGLRELRVILMEKSLIMEENKEEIERQLLELNLTLQHLHAGHADLIKYVKDCNCQRVNSDVDVAPEGHRDVMHTLEETQVSLDEQHQLDGSSLQALQSTVDAMSSAMDAYRGEGERARAERARIRSQLRALDHAVEALKTAANGTRKEIRLLHGSFTALLEDALRHQAVLAALFGEEMIDEMSEEAPRPLPLDYEQIRLALQDAASGLQEQAIGWEDLATRVEALEKAAGGFVEQHPQLAEGLEPSHDSGREEEAMTLAELEQEIRRLSSDVKQIGQCCEASWAASLNSSLEDLHSMLLDTQHGLRQHRQLFHNLFQNFQGLVASNISLDLGKLQAMLSKKDKKQPRGPGESRKRDKKQVVMSTDAHAKGLELWETGSPVAFYAGSSEGATALQMVKFNTTSINVGSSYFPEHGYFRAPKRGVYLFAVSITFGPGPGMGQLVFEGHHRVPVYSTEQRGGSTATTFAMVELQKGERAWFELIQGSATKGSQPGTAFGGFLMFKT.

The first 22 residues, 1-22 (MIPTLLLGFGVYLSWGLLGSWA), serve as a signal peptide directing secretion. The EMI domain maps to 54–132 (RRNWCPYQKS…PGFQGPDCQD (79 aa)). 3 disulfide bridges follow: C58-C122, C85-C92, and C121-C130. O-linked (Fuc...) serine glycosylation is present at S63. The O-linked (Fuc) threonine glycan is linked to T67. Residues 128-150 (PDCQDHNPTANPEPTEPSGKLQE) are disordered. N-linked (GlcNAc...) asparagine glycans are attached at residues N205, N214, N249, N261, N350, N379, N439, and N472. Coiled-coil stretches lie at residues 391–480 (EEEL…HLHA) and 551–580 (RGEGERARAERARIRSQLRALDHAVEALKT). N-linked (GlcNAc...) asparagine glycosylation occurs at N583. The stretch at 688 to 720 (DSGREEEAMTLAELEQEIRRLSSDVKQIGQCCE) forms a coiled coil. Residues N728 and N766 are each glycosylated (N-linked (GlcNAc...) asparagine). Positions 778–801 (LSKKDKKQPRGPGESRKRDKKQVV) are disordered. Residues 815–943 (ETGSPVAFYA…AFGGFLMFKT (129 aa)) enclose the C1q domain. N-linked (GlcNAc...) asparagine glycosylation occurs at N839.

As to quaternary structure, heteromer of p110, p125, p140 and p200 subunits; disulfide-linked. Interacts with VEGFA. Interacts with CD93; this interaction promotes angiogenesis. Interacts with CD248. N- and O-glycosylated. Post-translationally, processed by matrix metalloproteinases (MMPs) including MMP9 and, to a lesser degree, by MMP2 upon angiogenic stimulation. In terms of processing, O-fucosylated within the EMI domain (at Ser-63 and Thr-67) by FUT10/POFUT3 and FUT11/POFUT4.

The protein localises to the secreted. It is found in the extracellular space. It localises to the extracellular matrix. Its function is as follows. Extracellular matrix protein that plays significant roles in the vascular system and is required for the maintenance and stability of blood vessel. Affects several essential steps in angiogenesis including endothelial cell proliferation, migration, and tube formation. Positively regulates angiogenesis by acting as a ligand for CD93 receptor. The protein is Multimerin-2 of Mus musculus (Mouse).